Consider the following 758-residue polypeptide: 3-isopropylmalate dehydratase (758 aa).

3 residues coordinate [4Fe-4S] cluster: Cys-359, Cys-420, and Cys-423. Residues Ser-486 and Ser-488 each carry the phosphoserine modification.

This sequence belongs to the aconitase/IPM isomerase family. It depends on [4Fe-4S] cluster as a cofactor.

The enzyme catalyses (2R,3S)-3-isopropylmalate = (2S)-2-isopropylmalate. The protein operates within amino-acid biosynthesis; L-leucine biosynthesis; L-leucine from 3-methyl-2-oxobutanoate: step 2/4. In terms of biological role, catalyzes the isomerization between 2-isopropylmalate and 3-isopropylmalate, via the formation of 2-isopropylmaleate. In Schizosaccharomyces pombe (strain 972 / ATCC 24843) (Fission yeast), this protein is 3-isopropylmalate dehydratase (leu2).